We begin with the raw amino-acid sequence, 372 residues long: Enolase (372 aa).

Positions 95 and 104 each coordinate substrate. Glu-147 acts as the Proton donor in catalysis. The Mg(2+) site is built by Asp-182, Glu-232, and Asp-257. Positions 232 and 257 each coordinate substrate. Residue Lys-282 is the Proton acceptor of the active site. Substrate-binding positions include 309 to 312 (SHRS) and Lys-333.

This sequence belongs to the enolase family. As to quaternary structure, homodimer. The cofactor is Mg(2+).

It is found in the cytoplasm. It carries out the reaction (2R)-2-phosphoglycerate = phosphoenolpyruvate + H2O. The protein operates within carbohydrate degradation; glycolysis; pyruvate from D-glyceraldehyde 3-phosphate: step 4/5. The protein is Enolase (ENO) of Chlamydomonas reinhardtii (Chlamydomonas smithii).